Consider the following 436-residue polypeptide: Immediate-early phosphoprotein 57 (436 aa).

A disordered region spans residues 71–140 (VPKRERSKTP…TPSNQNPLTE (70 aa)). The segment covering 104 to 119 (QRPAPSARSRRPQPYS) has biased composition (low complexity). Polar residues predominate over residues 127-138 (KPQSTPSNQNPL).

Belongs to the herpesviridae UL69 family.

The protein resides in the host nucleus. The protein localises to the host cytoplasm. Acts at a post-transcriptional level to regulate viral gene expression. This Alcelaphine herpesvirus 1 (strain C500) (AlHV-1) protein is Immediate-early phosphoprotein 57 (57).